Reading from the N-terminus, the 215-residue chain is Pyrophosphatase PpaX (215 aa).

Aspartate 9 acts as the Nucleophile in catalysis.

Belongs to the HAD-like hydrolase superfamily. PpaX family. It depends on Mg(2+) as a cofactor.

The catalysed reaction is diphosphate + H2O = 2 phosphate + H(+). In terms of biological role, hydrolyzes pyrophosphate formed during P-Ser-HPr dephosphorylation by HPrK/P. Might play a role in controlling the intracellular pyrophosphate pool. This chain is Pyrophosphatase PpaX, found in Halalkalibacterium halodurans (strain ATCC BAA-125 / DSM 18197 / FERM 7344 / JCM 9153 / C-125) (Bacillus halodurans).